The chain runs to 288 residues: Nucleotide-binding protein APP7_0339 (288 aa).

ATP is bound at residue 8–15 (GRSGSGKS). 56–59 (DIRN) serves as a coordination point for GTP.

This sequence belongs to the RapZ-like family.

In terms of biological role, displays ATPase and GTPase activities. In Actinobacillus pleuropneumoniae serotype 7 (strain AP76), this protein is Nucleotide-binding protein APP7_0339.